We begin with the raw amino-acid sequence, 561 residues long: MGVRSDTIKKGFERAPHRSLLRATGLTDADFDKPFIGIANSHVDIIPGHFFLQEYGRIAKDEIRKAGGVPFEFNTIGVDDGIAMGHAGMLYSLPSRELIADSIETMMNAHSLDALLCIPNCDKIVPGMLMGALRVDVPTVFCSGGPMKAGRMADGTAIDLTTAFEAVGKRALGQMSDAELYEIECKACPSGGSCSGMFTANSMNVLCEAMGVALPGNGTALALTPEREALLRRAARRAVEIAGDERFRLRRIVNADAIHNAMVVDMAMGGSSNTVLHMLAIAREAGVEFGLRQIEAVAAKVGHIAKIAPSLSTVHIEDVHRAGGVPAVLHEVARRGGVVREDALTVTGETVGERIRGAEIKDRSVIHPLEEAYSAVGGLAVLFGNLAPEGAVVKTAGIQPSMRKFTGRAICFDSQEEAIAGIMGGKVKPGHFVVIRYEGPRGGPGMQEMLAPTSLIMGMGLGEQVALATDGRFSGATRGACVGHVSPEAAEGGPLALVQDGDAVTIDVEARALTVDVPDAELARRREGFRPKRKEIRSSWLKRYALLVSNASAGAVMKTEL.

Asp80 lines the Mg(2+) pocket. Cys121 is a binding site for [2Fe-2S] cluster. Residues Asp122 and Lys123 each coordinate Mg(2+). N6-carboxylysine is present on Lys123. Cys194 is a [2Fe-2S] cluster binding site. Glu448 provides a ligand contact to Mg(2+). Ser474 acts as the Proton acceptor in catalysis.

This sequence belongs to the IlvD/Edd family. In terms of assembly, homodimer. Requires [2Fe-2S] cluster as cofactor. The cofactor is Mg(2+).

It catalyses the reaction (2R)-2,3-dihydroxy-3-methylbutanoate = 3-methyl-2-oxobutanoate + H2O. It carries out the reaction (2R,3R)-2,3-dihydroxy-3-methylpentanoate = (S)-3-methyl-2-oxopentanoate + H2O. It functions in the pathway amino-acid biosynthesis; L-isoleucine biosynthesis; L-isoleucine from 2-oxobutanoate: step 3/4. The protein operates within amino-acid biosynthesis; L-valine biosynthesis; L-valine from pyruvate: step 3/4. In terms of biological role, functions in the biosynthesis of branched-chain amino acids. Catalyzes the dehydration of (2R,3R)-2,3-dihydroxy-3-methylpentanoate (2,3-dihydroxy-3-methylvalerate) into 2-oxo-3-methylpentanoate (2-oxo-3-methylvalerate) and of (2R)-2,3-dihydroxy-3-methylbutanoate (2,3-dihydroxyisovalerate) into 2-oxo-3-methylbutanoate (2-oxoisovalerate), the penultimate precursor to L-isoleucine and L-valine, respectively. This chain is Dihydroxy-acid dehydratase, found in Anaeromyxobacter sp. (strain Fw109-5).